The chain runs to 405 residues: L-rhamnonate dehydratase (405 aa).

H33 and R59 together coordinate substrate. Mg(2+)-binding residues include D226, E252, and E280. H329 serves as the catalytic Proton acceptor. A substrate-binding site is contributed by E349.

Belongs to the mandelate racemase/muconate lactonizing enzyme family. RhamD subfamily. Homooctamer; tetramer of dimers. Requires Mg(2+) as cofactor.

It catalyses the reaction L-rhamnonate = 2-dehydro-3-deoxy-L-rhamnonate + H2O. In terms of biological role, catalyzes the dehydration of L-rhamnonate to 2-keto-3-deoxy-L-rhamnonate (KDR). This Salmonella paratyphi A (strain AKU_12601) protein is L-rhamnonate dehydratase.